Here is a 448-residue protein sequence, read N- to C-terminus: Probable glycine dehydrogenase (decarboxylating) subunit 1 (448 aa).

The protein belongs to the GcvP family. N-terminal subunit subfamily. The glycine cleavage system is composed of four proteins: P, T, L and H. In this organism, the P 'protein' is a heterodimer of two subunits.

The enzyme catalyses N(6)-[(R)-lipoyl]-L-lysyl-[glycine-cleavage complex H protein] + glycine + H(+) = N(6)-[(R)-S(8)-aminomethyldihydrolipoyl]-L-lysyl-[glycine-cleavage complex H protein] + CO2. Functionally, the glycine cleavage system catalyzes the degradation of glycine. The P protein binds the alpha-amino group of glycine through its pyridoxal phosphate cofactor; CO(2) is released and the remaining methylamine moiety is then transferred to the lipoamide cofactor of the H protein. The chain is Probable glycine dehydrogenase (decarboxylating) subunit 1 from Staphylococcus aureus (strain Mu3 / ATCC 700698).